Here is a 354-residue protein sequence, read N- to C-terminus: uncharacterized protein (354 aa).

The 238-residue stretch at 48-285 (VETWEISKIY…DEGYEVVLKG (238 aa)) folds into the ABC transporter domain. 87-94 (GPNGAGKT) provides a ligand contact to ATP.

It belongs to the ABC transporter superfamily.

This is an uncharacterized protein from Synechocystis sp. (strain ATCC 27184 / PCC 6803 / Kazusa).